The chain runs to 208 residues: Uracil phosphoribosyltransferase (208 aa).

5-phospho-alpha-D-ribose 1-diphosphate is bound by residues arginine 78, arginine 103, and 130–138; that span reads DPMLATGGS. Residues isoleucine 193 and 198 to 200 contribute to the uracil site; that span reads GDA. A 5-phospho-alpha-D-ribose 1-diphosphate-binding site is contributed by aspartate 199.

Belongs to the UPRTase family. Mg(2+) serves as cofactor.

It carries out the reaction UMP + diphosphate = 5-phospho-alpha-D-ribose 1-diphosphate + uracil. The protein operates within pyrimidine metabolism; UMP biosynthesis via salvage pathway; UMP from uracil: step 1/1. Allosterically activated by GTP. In terms of biological role, catalyzes the conversion of uracil and 5-phospho-alpha-D-ribose 1-diphosphate (PRPP) to UMP and diphosphate. This chain is Uracil phosphoribosyltransferase, found in Klebsiella pneumoniae (strain 342).